We begin with the raw amino-acid sequence, 333 residues long: Putative pectinesterase 14 (333 aa).

A signal peptide spans 1–16; the sequence is MLFFILFLSIISPIES. N-linked (GlcNAc...) asparagine glycans are attached at residues Asn-108 and Asn-114. Thr-116 contacts substrate. Asn-133 is a glycosylation site (N-linked (GlcNAc...) asparagine). Residue Gln-151 coordinates substrate. The Proton donor role is filled by Asp-174. The active-site Nucleophile is Asp-195. Arg-253 is a binding site for substrate. 2 N-linked (GlcNAc...) asparagine glycosylation sites follow: Asn-302 and Asn-323.

Belongs to the pectinesterase family. In terms of tissue distribution, expressed in flower buds.

Its subcellular location is the secreted. The protein localises to the cell wall. The enzyme catalyses [(1-&gt;4)-alpha-D-galacturonosyl methyl ester](n) + n H2O = [(1-&gt;4)-alpha-D-galacturonosyl](n) + n methanol + n H(+). It participates in glycan metabolism; pectin degradation; 2-dehydro-3-deoxy-D-gluconate from pectin: step 1/5. Functionally, acts in the modification of cell walls via demethylesterification of cell wall pectin. In Arabidopsis thaliana (Mouse-ear cress), this protein is Putative pectinesterase 14 (PME14).